The sequence spans 537 residues: Leucine-rich repeat LGI family member 4 (537 aa).

A signal peptide spans 1–19 (MGGAGILLLLLAGAGVVVA). LRR repeat units follow at residues 53-74 (TLLS…SFLR), 77-98 (SLHL…AFAG), 101-122 (HLQY…ALRG), and 125-146 (SLTH…LFRG). Positions 158–208 (NPFQCDCRVLWLLQWMPTVNASVGTGACAGPASLSHMQLHHLDPKTFKCRA) constitute an LRRCT domain. N177 is a glycosylation site (N-linked (GlcNAc...) asparagine). EAR repeat units follow at residues 210–252 (ELSW…SWDY), 256–298 (RFRP…ARPS), 302–349 (RLAP…CRDG), 351–394 (GFYP…HWTG), 396–439 (RFER…RWDG), 441–483 (MFRL…RLEP), and 487–532 (LLEP…QHHE).

Can bind to ADAM11, ADAM22 and ADAM23. Widely expressed, with highest expression in brain.

The protein localises to the secreted. Its function is as follows. Component of Schwann cell signaling pathway(s) that controls axon segregation and myelin formation. The protein is Leucine-rich repeat LGI family member 4 (LGI4) of Homo sapiens (Human).